We begin with the raw amino-acid sequence, 353 residues long: Ferrochelatase (353 aa).

Residues His-223 and Glu-304 each coordinate Fe cation.

It belongs to the ferrochelatase family.

It is found in the cytoplasm. The enzyme catalyses heme b + 2 H(+) = protoporphyrin IX + Fe(2+). It functions in the pathway porphyrin-containing compound metabolism; protoheme biosynthesis; protoheme from protoporphyrin-IX: step 1/1. In terms of biological role, catalyzes the ferrous insertion into protoporphyrin IX. In Mesorhizobium japonicum (strain LMG 29417 / CECT 9101 / MAFF 303099) (Mesorhizobium loti (strain MAFF 303099)), this protein is Ferrochelatase.